The sequence spans 249 residues: Aspartate/glutamate leucyltransferase (249 aa).

Belongs to the R-transferase family. Bpt subfamily.

It localises to the cytoplasm. It carries out the reaction N-terminal L-glutamyl-[protein] + L-leucyl-tRNA(Leu) = N-terminal L-leucyl-L-glutamyl-[protein] + tRNA(Leu) + H(+). The catalysed reaction is N-terminal L-aspartyl-[protein] + L-leucyl-tRNA(Leu) = N-terminal L-leucyl-L-aspartyl-[protein] + tRNA(Leu) + H(+). Functions in the N-end rule pathway of protein degradation where it conjugates Leu from its aminoacyl-tRNA to the N-termini of proteins containing an N-terminal aspartate or glutamate. The sequence is that of Aspartate/glutamate leucyltransferase from Brucella melitensis biotype 2 (strain ATCC 23457).